We begin with the raw amino-acid sequence, 171 residues long: Putative rhomboid protein L523 (171 aa).

4 helical membrane passes run 3 to 23 (YVTY…LNFF), 67 to 87 (FAFC…AEHT), 94 to 114 (VYTV…LMSL), and 119 to 139 (GLSI…SGIS). Catalysis depends on Ser100, which acts as the Nucleophile. His143 is a catalytic residue. A helical membrane pass occupies residues 144 to 164 (ICGMIAGFVYVVLFPLPKGSV).

It belongs to the peptidase S54 family.

It localises to the membrane. In terms of biological role, probable serine protease. This is Putative rhomboid protein L523 from Acanthamoeba polyphaga mimivirus (APMV).